The chain runs to 1123 residues: Adenylyl cyclase X E (1123 aa).

Residues 1 to 47 (MPRSLGNCQLNYSKERMWEPGYLKAKCAELRLESEFRLYRIRLWKSY) are Cytoplasmic-facing. A helical transmembrane segment spans residues 48–68 (LLTFFMLHIFVTSVHCALLLA). Over 69–73 (TIERR) the chain is Extracellular. Residues 74-94 (SIIYFDVALSIGCALVLILVL) traverse the membrane as a helical segment. The Cytoplasmic segment spans residues 95-106 (SVNFCDEFIAKH). A helical transmembrane segment spans residues 107-127 (TWYMYASSIFASLTLVFADLT). Residues 128–137 (ESIYHTYAHS) are Extracellular-facing. The helical transmembrane segment at 138–158 (WILGTFYDTYIIYMIYMFLPI) threads the bilayer. Residues 159 to 163 (HFISG) are Cytoplasmic-facing. A helical transmembrane segment spans residues 164-184 (AVLLALLVSGLYILYFVIFIA). The Extracellular portion of the chain corresponds to 185–196 (QGFAQFASALFS). Residues 197-217 (VGGMSVDIVHYLCLNLVGIFY) traverse the membrane as a helical segment. Residues 218–581 (RVMNDTVVRS…YLKQTDYMYK (364 aa)) are Cytoplasmic-facing. Residues 346–348 (LGD) and R392 each bind ATP. D348 provides a ligand contact to Mg(2+). A helical transmembrane segment spans residues 582–602 (YSIILSASVGCSLVYIELMDT). At 603 to 608 (QMICSS) the chain is on the extracellular side. A helical transmembrane segment spans residues 609–629 (CFVLPASVATIQCILALIAWY). The Cytoplasmic portion of the chain corresponds to 630 to 667 (KKYCWTRYGRNNVPHHYNGFSCFIFRIHDKILNSLPIR). The chain crosses the membrane as a helical span at residues 668–688 (ICIYLFLMISSFFVMCLIVMS). Topologically, residues 689 to 719 (CQREEFEMAYIEERLFHYEQEAHICFHPWVT) are extracellular. A helical transmembrane segment spans residues 720-740 (TNMLSLMICLTFTFAHIPIMV). Residues 741–743 (KTA) lie on the Cytoplasmic side of the membrane. Residues 744–764 (VAILETLAYLLLIFFQFDFVF) traverse the membrane as a helical segment. Over 765 to 772 (HHSVTTNP) the chain is Extracellular. The chain crosses the membrane as a helical span at residues 773–793 (YFKSEYAHALLICITFLIMFV). The Cytoplasmic portion of the chain corresponds to 794 to 1123 (KERQIEFTNK…STSRHTLQSL (330 aa)). Residues K903, 1014-1016 (DIW), 1021-1025 (NMASR), and K1061 contribute to the ATP site.

This sequence belongs to the adenylyl cyclase class-4/guanylyl cyclase family. In terms of tissue distribution, expressed in labella.

The protein resides in the membrane. The enzyme catalyses ATP = 3',5'-cyclic AMP + diphosphate. In terms of biological role, catalyzes the formation of the signaling molecule cAMP in response to G-protein signaling. The polypeptide is Adenylyl cyclase X E (Drosophila melanogaster (Fruit fly)).